The following is a 280-amino-acid chain: MTTLIRRGRRAEEGQERRADSEDSIKDKDEEDSADSKEIRLTLMEEVLLLGLKDKEGYTSFWNDCISSGLRGGILIELFLRGRVVLEPATIRKKRLTDKKVLLKSDKLTGDVLLDETIKHMKATEPAETVQSWIELLTGETWNPFKLQYQLRNVRERIAKNLVEKGILTTEKQNFLLFDMTTHPVTNTTEKQRLVKKLQESLLEKWVNDPHRMDKRTLALLVLAHSSDVLENAFSSLSDEKYDMAMIRSKELLDLEPDTEGTKPNACEMIWAVLSAFNKS.

Positions 1–32 (MTTLIRRGRRAEEGQERRADSEDSIKDKDEED) are disordered. The span at 10 to 32 (RAEEGQERRADSEDSIKDKDEED) shows a compositional bias: basic and acidic residues. A 1,2-diacyl-sn-glycero-3-phospho-(1D-myo-inositol 4-phosphate)-binding residues include W62, R71, R152, and R155. The segment at 171-182 (EKQNFLLFDMTT) is beta-hairpin required for oligomerization.

It belongs to the GOLPH3/VPS74 family. Homooligomer.

Its subcellular location is the golgi apparatus. It localises to the golgi stack membrane. The protein localises to the trans-Golgi network membrane. In terms of biological role, phosphatidylinositol-4-phosphate-binding protein that may play a role in the process of vesicle budding at the Golgi and anterograde transport to the plasma membrane. The protein is Golgi phosphoprotein 3-like B (golph3l-b) of Xenopus laevis (African clawed frog).